The primary structure comprises 258 residues: MNRINQLFSTKQKDILSIYFCAGFPTLEGTASTIKVLEKKGINMIEIGIPFSDPMADGPVIQHAATRALKNGMTLKLLFDQLKDIRKEVQIPLVLMGYLNPIMQYGFKDFCRTCRETGIDGVIIPDLPFKDYMEEYRSIAEEQDVRIIMLITPETSEERIRLIDEHTDGFIYMVSSAAITGAQKDFNAQKQAYFQRIADMNLRNPRMIGFGISNKQTFETASAHAAGAIIGSKFVTLLDEEDGDTEKAADKLLEALKN.

Active-site proton acceptor residues include Glu46 and Asp57.

It belongs to the TrpA family. As to quaternary structure, tetramer of two alpha and two beta chains.

It carries out the reaction (1S,2R)-1-C-(indol-3-yl)glycerol 3-phosphate + L-serine = D-glyceraldehyde 3-phosphate + L-tryptophan + H2O. The protein operates within amino-acid biosynthesis; L-tryptophan biosynthesis; L-tryptophan from chorismate: step 5/5. Its function is as follows. The alpha subunit is responsible for the aldol cleavage of indoleglycerol phosphate to indole and glyceraldehyde 3-phosphate. This is Tryptophan synthase alpha chain from Phocaeicola vulgatus (strain ATCC 8482 / DSM 1447 / JCM 5826 / CCUG 4940 / NBRC 14291 / NCTC 11154) (Bacteroides vulgatus).